We begin with the raw amino-acid sequence, 165 residues long: Phosphopantetheine adenylyltransferase (165 aa).

Threonine 10 lines the substrate pocket. ATP-binding positions include 10 to 11 (TF) and histidine 18. Substrate contacts are provided by lysine 42, leucine 75, and arginine 89. ATP contacts are provided by residues 90–92 (GVR), glutamate 100, and 125–131 (VSFISSS).

The protein belongs to the bacterial CoaD family. In terms of assembly, homohexamer. Mg(2+) serves as cofactor.

The protein resides in the cytoplasm. It carries out the reaction (R)-4'-phosphopantetheine + ATP + H(+) = 3'-dephospho-CoA + diphosphate. It functions in the pathway cofactor biosynthesis; coenzyme A biosynthesis; CoA from (R)-pantothenate: step 4/5. Reversibly transfers an adenylyl group from ATP to 4'-phosphopantetheine, yielding dephospho-CoA (dPCoA) and pyrophosphate. In Buchnera aphidicola subsp. Schizaphis graminum (strain Sg), this protein is Phosphopantetheine adenylyltransferase.